We begin with the raw amino-acid sequence, 89 residues long: Small ribosomal subunit protein uS15 (89 aa).

The protein belongs to the universal ribosomal protein uS15 family. Part of the 30S ribosomal subunit. Forms a bridge to the 50S subunit in the 70S ribosome, contacting the 23S rRNA.

Functionally, one of the primary rRNA binding proteins, it binds directly to 16S rRNA where it helps nucleate assembly of the platform of the 30S subunit by binding and bridging several RNA helices of the 16S rRNA. In terms of biological role, forms an intersubunit bridge (bridge B4) with the 23S rRNA of the 50S subunit in the ribosome. The protein is Small ribosomal subunit protein uS15 of Cereibacter sphaeroides (strain ATCC 17025 / ATH 2.4.3) (Rhodobacter sphaeroides).